The chain runs to 250 residues: Triosephosphate isomerase (250 aa).

9-11 (NWK) provides a ligand contact to substrate. H96 acts as the Electrophile in catalysis. The active-site Proton acceptor is the E168. Substrate contacts are provided by residues G174, S216, and 237–238 (GG).

The protein belongs to the triosephosphate isomerase family. Homodimer.

It is found in the cytoplasm. It catalyses the reaction D-glyceraldehyde 3-phosphate = dihydroxyacetone phosphate. The protein operates within carbohydrate biosynthesis; gluconeogenesis. It functions in the pathway carbohydrate degradation; glycolysis; D-glyceraldehyde 3-phosphate from glycerone phosphate: step 1/1. Functionally, involved in the gluconeogenesis. Catalyzes stereospecifically the conversion of dihydroxyacetone phosphate (DHAP) to D-glyceraldehyde-3-phosphate (G3P). The sequence is that of Triosephosphate isomerase from Leptospira borgpetersenii serovar Hardjo-bovis (strain JB197).